We begin with the raw amino-acid sequence, 396 residues long: 1-deoxy-D-xylulose 5-phosphate reductoisomerase (396 aa).

NADPH contacts are provided by T15, G16, S17, I18, G41, and N129. Residue K130 coordinates 1-deoxy-D-xylulose 5-phosphate. E131 is a binding site for NADPH. Residue D155 participates in Mn(2+) binding. 1-deoxy-D-xylulose 5-phosphate is bound by residues S156, E157, S182, and H205. A Mn(2+)-binding site is contributed by E157. G211 serves as a coordination point for NADPH. 1-deoxy-D-xylulose 5-phosphate is bound by residues S218, N223, K224, and E227. Position 227 (E227) interacts with Mn(2+).

Belongs to the DXR family. It depends on Mg(2+) as a cofactor. The cofactor is Mn(2+).

It catalyses the reaction 2-C-methyl-D-erythritol 4-phosphate + NADP(+) = 1-deoxy-D-xylulose 5-phosphate + NADPH + H(+). It participates in isoprenoid biosynthesis; isopentenyl diphosphate biosynthesis via DXP pathway; isopentenyl diphosphate from 1-deoxy-D-xylulose 5-phosphate: step 1/6. Catalyzes the NADPH-dependent rearrangement and reduction of 1-deoxy-D-xylulose-5-phosphate (DXP) to 2-C-methyl-D-erythritol 4-phosphate (MEP). The polypeptide is 1-deoxy-D-xylulose 5-phosphate reductoisomerase (Xanthomonas euvesicatoria pv. vesicatoria (strain 85-10) (Xanthomonas campestris pv. vesicatoria)).